The sequence spans 73 residues: Mitofissin (73 aa).

The protein belongs to the ?ATG44? family. In terms of assembly, homooligomer. Found as homooctamer in solution, but binds to membranes either as a monomer, dimer, or tetramer, not as an octamer.

The protein resides in the mitochondrion intermembrane space. It is found in the vacuole. Its function is as follows. Mitochondrial fission factor that acts directly on lipid membranes to drive mitochondrial fission required for mitophagy. Directly binds to lipid membranes and brings about lipid membrane fragility to facilitate membrane fission and engulfment of mitochondria by the phagophore. This is Mitofissin from Saccharomyces cerevisiae (strain ATCC 204508 / S288c) (Baker's yeast).